Here is a 117-residue protein sequence, read N- to C-terminus: UPF0102 protein YPN_3432 (117 aa).

It belongs to the UPF0102 family.

The sequence is that of UPF0102 protein YPN_3432 from Yersinia pestis bv. Antiqua (strain Nepal516).